A 471-amino-acid chain; its full sequence is Serine/threonine-protein kinase sid1 (471 aa).

Positions 9-260 (YTLLRKLGSG…AKELLQHPFI (252 aa)) constitute a Protein kinase domain. Residues 15–23 (LGSGSFGVV) and Lys38 contribute to the ATP site. The Proton acceptor role is filled by Asp129.

This sequence belongs to the protein kinase superfamily. STE Ser/Thr protein kinase family. STE20 subfamily. Interacts with cdc14.

It localises to the cytoplasm. The protein resides in the cytoskeleton. The protein localises to the microtubule organizing center. It is found in the spindle pole body. The enzyme catalyses L-seryl-[protein] + ATP = O-phospho-L-seryl-[protein] + ADP + H(+). It carries out the reaction L-threonyl-[protein] + ATP = O-phospho-L-threonyl-[protein] + ADP + H(+). In terms of biological role, has a role in the septation initiation network (SIN) required for cytokinesis. The sequence is that of Serine/threonine-protein kinase sid1 (sid1) from Schizosaccharomyces pombe (strain 972 / ATCC 24843) (Fission yeast).